The sequence spans 274 residues: 2,3,4,5-tetrahydropyridine-2,6-dicarboxylate N-succinyltransferase (274 aa).

The substrate site is built by Arg-104 and Asp-141.

This sequence belongs to the transferase hexapeptide repeat family. As to quaternary structure, homotrimer.

Its subcellular location is the cytoplasm. The catalysed reaction is (S)-2,3,4,5-tetrahydrodipicolinate + succinyl-CoA + H2O = (S)-2-succinylamino-6-oxoheptanedioate + CoA. It participates in amino-acid biosynthesis; L-lysine biosynthesis via DAP pathway; LL-2,6-diaminopimelate from (S)-tetrahydrodipicolinate (succinylase route): step 1/3. This chain is 2,3,4,5-tetrahydropyridine-2,6-dicarboxylate N-succinyltransferase, found in Photorhabdus laumondii subsp. laumondii (strain DSM 15139 / CIP 105565 / TT01) (Photorhabdus luminescens subsp. laumondii).